Reading from the N-terminus, the 157-residue chain is Ribosome maturation factor RimP (157 aa).

Belongs to the RimP family.

The protein localises to the cytoplasm. Required for maturation of 30S ribosomal subunits. This chain is Ribosome maturation factor RimP, found in Bacillus pumilus (strain SAFR-032).